The chain runs to 548 residues: Probable manganese-dependent inorganic pyrophosphatase (548 aa).

Residues 1–74 (MKALERVYVI…HIETLEPTVE (74 aa)) are PPase part 1. 3 residues coordinate Mn(2+): His12, Asp16, and Asp18. 2 consecutive CBS domains span residues 77–132 (ELKN…RLKI) and 254–311 (MSKK…VILV). The segment at 306-548 (KKVILVDHNE…KIGEVLRRER (243 aa)) is PPase part 2. Residues Asp312, His334, and Asp386 each coordinate Mn(2+).

The protein belongs to the PPase class C family. Mn(2+) serves as cofactor.

The protein resides in the cytoplasm. It carries out the reaction diphosphate + H2O = 2 phosphate + H(+). The sequence is that of Probable manganese-dependent inorganic pyrophosphatase (ppaC) from Thermotoga maritima (strain ATCC 43589 / DSM 3109 / JCM 10099 / NBRC 100826 / MSB8).